Reading from the N-terminus, the 362-residue chain is GTPase Obg (362 aa).

An Obg domain is found at 1–159 (MKFIDEARIE…RKLKLELKVL (159 aa)). The disordered stretch occupies residues 129–148 (HFKSSTNRAPRQKTNGKEGE). Residues 130 to 141 (FKSSTNRAPRQK) are compositionally biased toward polar residues. The OBG-type G domain maps to 160–334 (ADVGLLGMPN…LCYALQDYLD (175 aa)). Residues 166–173 (GMPNAGKS), 191–195 (FTTLH), 213–216 (DIPG), 284–287 (NKVD), and 315–317 (SAL) contribute to the GTP site. Serine 173 and threonine 193 together coordinate Mg(2+). Positions 340 to 362 (RDDAEERAADPRYQDQAADKSPD) are disordered.

The protein belongs to the TRAFAC class OBG-HflX-like GTPase superfamily. OBG GTPase family. Monomer. Mg(2+) is required as a cofactor.

It is found in the cytoplasm. Functionally, an essential GTPase which binds GTP, GDP and possibly (p)ppGpp with moderate affinity, with high nucleotide exchange rates and a fairly low GTP hydrolysis rate. Plays a role in control of the cell cycle, stress response, ribosome biogenesis and in those bacteria that undergo differentiation, in morphogenesis control. In Polynucleobacter asymbioticus (strain DSM 18221 / CIP 109841 / QLW-P1DMWA-1) (Polynucleobacter necessarius subsp. asymbioticus), this protein is GTPase Obg.